A 118-amino-acid chain; its full sequence is uncharacterized protein (118 aa).

This is an uncharacterized protein from Saccharomyces cerevisiae (strain ATCC 204508 / S288c) (Baker's yeast).